Consider the following 784-residue polypeptide: Endonuclease MutS2 (784 aa).

Residue 335–342 (GPNTGGKT) participates in ATP binding. The region spanning 709–784 (LDLRGERYED…GTGVTIVELK (76 aa)) is the Smr domain.

The protein belongs to the DNA mismatch repair MutS family. MutS2 subfamily. In terms of assembly, homodimer. Binds to stalled ribosomes, contacting rRNA.

Its function is as follows. Endonuclease that is involved in the suppression of homologous recombination and thus may have a key role in the control of bacterial genetic diversity. Acts as a ribosome collision sensor, splitting the ribosome into its 2 subunits. Detects stalled/collided 70S ribosomes which it binds and splits by an ATP-hydrolysis driven conformational change. Acts upstream of the ribosome quality control system (RQC), a ribosome-associated complex that mediates the extraction of incompletely synthesized nascent chains from stalled ribosomes and their subsequent degradation. Probably generates substrates for RQC. The chain is Endonuclease MutS2 from Geobacillus kaustophilus (strain HTA426).